Consider the following 159-residue polypeptide: Ribosomal RNA large subunit methyltransferase H (159 aa).

S-adenosyl-L-methionine contacts are provided by residues L76, G108, and 127–132; that span reads FGKLTL.

The protein belongs to the RNA methyltransferase RlmH family. Homodimer.

Its subcellular location is the cytoplasm. It catalyses the reaction pseudouridine(1915) in 23S rRNA + S-adenosyl-L-methionine = N(3)-methylpseudouridine(1915) in 23S rRNA + S-adenosyl-L-homocysteine + H(+). In terms of biological role, specifically methylates the pseudouridine at position 1915 (m3Psi1915) in 23S rRNA. This chain is Ribosomal RNA large subunit methyltransferase H, found in Latilactobacillus sakei subsp. sakei (strain 23K) (Lactobacillus sakei subsp. sakei).